The following is a 102-amino-acid chain: MGKVGNIEHIEERAETELMPPSMYKVILNNDDYTPMDFVIEVLQLFFNKNEQEATDIMLAIHHQGKGICGVFPFGIAETKVAQVNQFARQNQHPLLCSLEKA.

This sequence belongs to the ClpS family. As to quaternary structure, binds to the N-terminal domain of the chaperone ClpA.

Its function is as follows. Involved in the modulation of the specificity of the ClpAP-mediated ATP-dependent protein degradation. The sequence is that of ATP-dependent Clp protease adapter protein ClpS from Shewanella loihica (strain ATCC BAA-1088 / PV-4).